A 471-amino-acid chain; its full sequence is MKIKTRFAPSPTGYLHVGGARTALYSWLFTRHFGGEFVLRIEDTDLERSTQEAIDAIMDGMNWLNLDWDEGPYFQTKRFDRYNAVIDQMLENGTAYRCYCSKERLDELREAQMTNGEKPRYDGRCRDSQCTHGADEPSVVRFRNPQAGSVIFNDKIRGPIEFSNQELDDLIIRRTDGSPTYNFCVVVDDWDMEITHVIRGEDHINNTPRQINILKALGAPVPEYAHVSMILGDDGKKLSKRHGAVGVMQYRDDGYLPEALLNYLVRLGWSHGDQEIFSVAEMTELFTLDAVSKSASAFNTEKLQWLNHHYINSLPPEQVAVHLSWQVEQLGIDTRNGPELVEIVKLLGERCKTLKEMAESCRYFYEEFDEFDADAAKKHLRPVARQPLEAVKAKLAAITEWTTENVHNAIQGTADELGVGMGKVGMPLRVAVTGAGQSPGMDVTVHAIGQARSLSRIDKALAFISEREAQQ.

A 'HIGH' region motif is present at residues Pro9–Gly19. Cys98, Cys100, Cys125, and Asp127 together coordinate Zn(2+). The short motif at Lys237–Arg241 is the 'KMSKS' region element. An ATP-binding site is contributed by Lys240.

The protein belongs to the class-I aminoacyl-tRNA synthetase family. Glutamate--tRNA ligase type 1 subfamily. As to quaternary structure, monomer. It depends on Zn(2+) as a cofactor.

The protein resides in the cytoplasm. It catalyses the reaction tRNA(Glu) + L-glutamate + ATP = L-glutamyl-tRNA(Glu) + AMP + diphosphate. Catalyzes the attachment of glutamate to tRNA(Glu) in a two-step reaction: glutamate is first activated by ATP to form Glu-AMP and then transferred to the acceptor end of tRNA(Glu). This Yersinia enterocolitica serotype O:8 / biotype 1B (strain NCTC 13174 / 8081) protein is Glutamate--tRNA ligase.